Here is a 134-residue protein sequence, read N- to C-terminus: MLSPKRTKFRKQHRGRMKGVSYRGNRICFGRFALQALEPAWITSGQIEAGRRTITRYARRGGKIWVRIFPDKPITMRPAETRMGSGKGSPEYWVSVIKPGRILYEMGGVSETVARAAARIAAYKMPIRTQFVTT.

This sequence belongs to the universal ribosomal protein uL16 family. As to quaternary structure, part of the 50S ribosomal subunit.

The protein resides in the plastid. It is found in the chloroplast. The chain is Large ribosomal subunit protein uL16c from Pinus koraiensis (Korean pine).